A 507-amino-acid polypeptide reads, in one-letter code: ATP synthase subunit alpha (507 aa).

170–177 provides a ligand contact to ATP; the sequence is GDRQTGKT.

This sequence belongs to the ATPase alpha/beta chains family. In terms of assembly, F-type ATPases have 2 components, CF(1) - the catalytic core - and CF(0) - the membrane proton channel. CF(1) has five subunits: alpha(3), beta(3), gamma(1), delta(1), epsilon(1). CF(0) has three main subunits: a(1), b(2) and c(9-12). The alpha and beta chains form an alternating ring which encloses part of the gamma chain. CF(1) is attached to CF(0) by a central stalk formed by the gamma and epsilon chains, while a peripheral stalk is formed by the delta and b chains.

Its subcellular location is the cell inner membrane. The enzyme catalyses ATP + H2O + 4 H(+)(in) = ADP + phosphate + 5 H(+)(out). Produces ATP from ADP in the presence of a proton gradient across the membrane. The alpha chain is a regulatory subunit. The sequence is that of ATP synthase subunit alpha from Fervidobacterium nodosum (strain ATCC 35602 / DSM 5306 / Rt17-B1).